Consider the following 512-residue polypeptide: Serine/threonine-protein kinase SSN3 (512 aa).

Disordered regions lie at residues 1–22 (MNNH…DRPW) and 75–94 (AEVS…TGSM). One can recognise a Protein kinase domain in the interval 106 to 455 (YKVVGFISSG…AAAALQHPFF (350 aa)). ATP-binding positions include 112-120 (ISSGTYGRV) and K136. Catalysis depends on D238, which acts as the Proton acceptor. 2 disordered regions span residues 368–388 (QPPI…RQAA) and 476–512 (RRVS…VKEG). Residues 373–382 (HGGHHGHHYQ) are compositionally biased toward basic residues. Composition is skewed to basic and acidic residues over residues 476 to 485 (RRVSQDDNDI) and 497 to 512 (GLPD…VKEG).

This sequence belongs to the protein kinase superfamily. CMGC Ser/Thr protein kinase family. CDC2/CDKX subfamily. As to quaternary structure, component of the SRB8-11 complex, a regulatory module of the Mediator complex. Mg(2+) serves as cofactor.

The protein localises to the nucleus. The catalysed reaction is L-seryl-[protein] + ATP = O-phospho-L-seryl-[protein] + ADP + H(+). It catalyses the reaction L-threonyl-[protein] + ATP = O-phospho-L-threonyl-[protein] + ADP + H(+). It carries out the reaction [DNA-directed RNA polymerase] + ATP = phospho-[DNA-directed RNA polymerase] + ADP + H(+). Component of the SRB8-11 complex. The SRB8-11 complex is a regulatory module of the Mediator complex which is itself involved in regulation of basal and activated RNA polymerase II-dependent transcription. The SRB8-11 complex may be involved in the transcriptional repression of a subset of genes regulated by Mediator. It may inhibit the association of the Mediator complex with RNA polymerase II to form the holoenzyme complex. The SRB8-11 complex phosphorylates the C-terminal domain (CTD) of the largest subunit of RNA polymerase II. The polypeptide is Serine/threonine-protein kinase SSN3 (SSN3) (Chaetomium globosum (strain ATCC 6205 / CBS 148.51 / DSM 1962 / NBRC 6347 / NRRL 1970) (Soil fungus)).